The sequence spans 200 residues: Charged multivesicular body protein 6-B (200 aa).

A lipid anchor (N-myristoyl glycine) is attached at Gly-2. Residues 9–102 (RRSRVTEQDK…FAQIEMKVIE (94 aa)) are a coiled coil. Positions 165-200 (QEDLELPEAPSEPLSDTVPEKQAVKNRPKPQLVAAS) are disordered. The Type-2 MIT-interacting motif motif lies at 168 to 179 (LELPEAPSEPLS).

This sequence belongs to the SNF7 family. Probable core component of the endosomal sorting required for transport complex III (ESCRT-III). ESCRT-III components are thought to multimerize to form a flat lattice on the perimeter membrane of the endosome.

Its subcellular location is the endomembrane system. It localises to the late endosome membrane. Probable core component of the endosomal sorting required for transport complex III (ESCRT-III) which is involved in multivesicular bodies (MVBs) formation and sorting of endosomal cargo proteins into MVBs. MVBs contain intraluminal vesicles (ILVs) that are generated by invagination and scission from the limiting membrane of the endosome and mostly are delivered to lysosomes enabling degradation of membrane proteins, such as stimulated growth factor receptors, lysosomal enzymes and lipids. In the ESCRT-III complex, it probably serves as an acceptor for the ESCRT-II complex on endosomal membranes. The sequence is that of Charged multivesicular body protein 6-B (chmp6-b) from Xenopus laevis (African clawed frog).